The primary structure comprises 195 residues: Early E3 22.2 kDa glycoprotein (195 aa).

Residues Asn-20, Asn-61, Asn-76, Asn-88, Asn-126, and Asn-139 are each glycosylated (N-linked (GlcNAc...) asparagine; by host).

This Canine adenovirus serotype 1 (strain Glaxo) (CAdV-1) protein is Early E3 22.2 kDa glycoprotein.